Reading from the N-terminus, the 170-residue chain is uncharacterized protein (170 aa).

The stretch at 15–81 (EAFDEKAEKE…EREKSKSAVS (67 aa)) forms a coiled coil. A compositionally biased stretch (basic and acidic residues) spans 20–77 (KAEKEKVEKEKALKEKTEKEKAEKEKAEKEKVEKEKAEKEKAAKEKAAKEKAEREKSK). The tract at residues 20–95 (KAEKEKVEKE…NQNSNKGNVE (76 aa)) is disordered. Over residues 78–92 (SAVSPATTNQNSNKG) the composition is skewed to polar residues. The helical transmembrane segment at 98–118 (VAIGVLAGGAVTGVAVGGAYL) threads the bilayer.

Its subcellular location is the membrane. This is an uncharacterized protein from Dictyostelium discoideum (Social amoeba).